Here is a 260-residue protein sequence, read N- to C-terminus: Fructose import ATP-binding protein FrcA (260 aa).

The 245-residue stretch at leucine 7–lysine 251 folds into the ABC transporter domain. Glycine 39–serine 46 contributes to the ATP binding site.

The protein belongs to the ABC transporter superfamily. As to quaternary structure, the complex is composed of two ATP-binding proteins (FrcA), two transmembrane proteins (FrcC) and a solute-binding protein (FrcB).

It localises to the cell inner membrane. It catalyses the reaction D-fructose(out) + ATP + H2O = D-fructose(in) + ADP + phosphate + H(+). Part of the high-affinity ABC transporter complex FrcBCA involved in fructose uptake. Is also a high-affinity transporter for ribose and mannose. Responsible for energy coupling to the transport system. The sequence is that of Fructose import ATP-binding protein FrcA from Rhizobium meliloti (Ensifer meliloti).